We begin with the raw amino-acid sequence, 672 residues long: Spermatid perinuclear RNA-binding protein (672 aa).

The DZF domain occupies 5-363 (RSFANDDRHV…ALKRPFEDGL (359 aa)). Disordered regions lie at residues 52–73 (TNKG…GENY) and 349–371 (GAGS…DPNK). The segment covering 357–371 (RPFEDGLGDDKDPNK) has biased composition (basic and acidic residues). A DRBM 1 domain is found at 387 to 453 (DLMNALMRLN…AVKVLQAMGY (67 aa)). The segment covering 466 to 476 (SDEKSDNESKN) has biased composition (basic and acidic residues). The segment at 466–499 (SDEKSDNESKNETVSSNSSNNTGNSTTETSSTLE) is disordered. Positions 477-497 (ETVSSNSSNNTGNSTTETSST) are enriched in low complexity. Positions 510–576 (SGKNPVMELN…ALAALEKLFS (67 aa)) constitute a DRBM 2 domain. Residues R612 and R617 each carry the asymmetric dimethylarginine modification.

Interacts with EIF2AK2. Associates with microtubules; it is unsure whether such interaction is direct or indirect.

The protein resides in the cytoplasm. In terms of biological role, involved in spermatogenesis and sperm function. Plays a role in regulation of cell growth. Binds to double-stranded DNA and RNA. Binds most efficiently to poly(I:C) RNA than to poly(dI:dC) DNA. Binds also to single-stranded poly(G) RNA. Binds non-specifically to the mRNA PRM1 3'-UTR and adenovirus VA RNA. This is Spermatid perinuclear RNA-binding protein (STRBP) from Pongo abelii (Sumatran orangutan).